The following is a 222-amino-acid chain: Superoxide dismutase [Mn], mitochondrial (222 aa).

The N-terminal 24 residues, 1 to 24, are a transit peptide targeting the mitochondrion; the sequence is MLSRAVCGTGRQLAPALGYLGSRQ. Histidine 50 lines the Mn(2+) pocket. Tyrosine 58 is modified (3'-nitrotyrosine). Lysine 68 and lysine 75 each carry N6-acetyllysine; alternate. An N6-succinyllysine; alternate mark is found at lysine 68 and lysine 75. Histidine 98 contacts Mn(2+). Lysine 114 bears the N6-acetyllysine mark. N6-acetyllysine; alternate occurs at positions 122 and 130. N6-succinyllysine; alternate occurs at positions 122 and 130. Aspartate 183 and histidine 187 together coordinate Mn(2+). N6-acetyllysine is present on lysine 202.

Belongs to the iron/manganese superoxide dismutase family. Homotetramer. Requires Mn(2+) as cofactor. Nitrated under oxidative stress. Nitration coupled with oxidation inhibits the catalytic activity. Post-translationally, acetylation at Lys-122 decreases enzymatic activity. Deacetylated by SIRT3 upon exposure to ionizing radiations or after long fasting. In terms of processing, polyubiquitinated; leading to proteasomal degradation. Deubiquitinated by USP36 which increases protein stability.

It localises to the mitochondrion matrix. It catalyses the reaction 2 superoxide + 2 H(+) = H2O2 + O2. Its function is as follows. Destroys superoxide anion radicals which are normally produced within the cells and which are toxic to biological systems. The sequence is that of Superoxide dismutase [Mn], mitochondrial (SOD2) from Macaca fascicularis (Crab-eating macaque).